Here is a 331-residue protein sequence, read N- to C-terminus: Protein mono-ADP-ribosyltransferase PARP11 (331 aa).

N6-(ADP-ribosyl)lysine is present on lysine 11. The WWE domain maps to 15-99; the sequence is SDVDDMDTSD…VTGKQRLIKR (85 aa). Cysteine 49 and cysteine 65 each carry ADP-ribosylcysteine. Aspartate 80 carries the post-translational modification ADP-ribosyl aspartic acid. A PARP catalytic domain is found at 116 to 331; sequence IPMPTHWENV…IYPEYLIDFH (216 aa).

This sequence belongs to the ARTD/PARP family. In terms of processing, auto-mono-ADP-ribosylated. Predominantly expressed in testis, preferentially in postmeiotic germ cells. Also detectable in other tissues, including liver, lung, spleen, thymus and brain.

The protein resides in the nucleus. Its subcellular location is the nuclear pore complex. It catalyses the reaction L-aspartyl-[protein] + NAD(+) = 4-O-(ADP-D-ribosyl)-L-aspartyl-[protein] + nicotinamide. It carries out the reaction L-cysteinyl-[protein] + NAD(+) = S-(ADP-D-ribosyl)-L-cysteinyl-[protein] + nicotinamide + H(+). The enzyme catalyses L-glutamyl-[protein] + NAD(+) = 5-O-(ADP-D-ribosyl)-L-glutamyl-[protein] + nicotinamide. The catalysed reaction is L-lysyl-[protein] + NAD(+) = N(6)-(ADP-D-ribosyl)-L-lysyl-[protein] + nicotinamide + H(+). Its function is as follows. Mono-ADP-ribosyltransferase that mediates mono-ADP-ribosylation of target proteins. Plays a role in nuclear envelope stability and nuclear remodeling during spermiogenesis. Inhibits the type I interferon activated signaling pathway. Mechanistically, mono-ADP-ribosylates beta-TrCP/BTRC to promote IFNAR1 ubiquitination and protect BTRC from ubiquitin-proteasome degradation. The chain is Protein mono-ADP-ribosyltransferase PARP11 from Mus musculus (Mouse).